The chain runs to 132 residues: Outer membrane protein RomA (132 aa).

The protein to M.tuberculosis Rv0906.

The protein localises to the cell outer membrane. This is Outer membrane protein RomA (romA) from Klebsiella pneumoniae.